A 101-amino-acid polypeptide reads, in one-letter code: Urease subunit beta (101 aa).

This sequence belongs to the urease beta subunit family. Heterotrimer of UreA (gamma), UreB (beta) and UreC (alpha) subunits. Three heterotrimers associate to form the active enzyme.

The protein localises to the cytoplasm. It catalyses the reaction urea + 2 H2O + H(+) = hydrogencarbonate + 2 NH4(+). Its pathway is nitrogen metabolism; urea degradation; CO(2) and NH(3) from urea (urease route): step 1/1. This chain is Urease subunit beta, found in Sinorhizobium fredii (strain NBRC 101917 / NGR234).